We begin with the raw amino-acid sequence, 606 residues long: Kelch-like protein 41 (606 aa).

Residue Ser3 is modified to Phosphoserine. The 68-residue stretch at 33-100 (IDCTLKAGDK…LYSASIDLND (68 aa)) folds into the BTB domain. A BACK domain is found at 135 to 237 (CLAILRLGLL…AEKYFKDHVE (103 aa)). Kelch repeat units follow at residues 346–398 (QVYV…EVDD), 399–447 (KIYV…SHNG), 448–495 (MIYC…IHKG), 497–542 (IVIA…SLAG), and 544–599 (LYAI…TRLN).

As to quaternary structure, interacts with NRAP. Part of a complex that contains CUL3, RBX1 and KLHL41. Interacts with LASP1. In terms of processing, ubiquitinated by E3 ubiquitin ligase complex formed by CUL3 and RBX1 and probably targeted for proteasome-independent degradation. Quinone-induced oxidative stress increases its ubiquitination. Primarily expressed in skeletal muscle. Also found in heart and lung.

The protein localises to the cytoplasm. The protein resides in the cytoskeleton. It localises to the cell projection. It is found in the pseudopodium. Its subcellular location is the ruffle. The protein localises to the myofibril. The protein resides in the sarcomere. It localises to the m line. It is found in the sarcoplasmic reticulum membrane. Its subcellular location is the endoplasmic reticulum membrane. Involved in skeletal muscle development and differentiation. Regulates proliferation and differentiation of myoblasts and plays a role in myofibril assembly by promoting lateral fusion of adjacent thin fibrils into mature, wide myofibrils. Required for pseudopod elongation in transformed cells. This chain is Kelch-like protein 41 (Klhl41), found in Rattus norvegicus (Rat).